The primary structure comprises 101 residues: Apolipoprotein C-III (101 aa).

The N-terminal stretch at 1-20 (MQPRMLLIVALVALLASARA) is a signal peptide. A Methionine sulfoxide modification is found at Met-64. The interval 69–101 (KSLKGYWSKFTDKFTGLWESGPEDQLTTPTLEP) is lipid-binding. O-linked (GalNAc...) threonine glycosylation occurs at Thr-96.

Belongs to the apolipoprotein C3 family. The most abundant glycoforms are characterized by an O-linked disaccharide galactose linked to N-acetylgalactosamine (Gal-GalNAc), further modified with up to 3 sialic acid residues. Less abundant glycoforms are characterized by more complex and fucosylated glycan moieties. O-glycosylated on Thr-96 with a core 1 or possibly core 8 glycan. Synthesized predominantly in liver and to a lesser degree in intestine.

The protein localises to the secreted. In terms of biological role, component of triglyceride-rich very low density lipoproteins (VLDL) and high density lipoproteins (HDL) in plasma. Plays a multifaceted role in triglyceride homeostasis. Intracellularly, promotes hepatic very low density lipoprotein 1 (VLDL1) assembly and secretion; extracellularly, attenuates hydrolysis and clearance of triglyceride-rich lipoproteins (TRLs). Impairs the lipolysis of TRLs by inhibiting lipoprotein lipase and the hepatic uptake of TRLs by remnant receptors. Formed of several curved helices connected via semiflexible hinges, so that it can wrap tightly around the curved micelle surface and easily adapt to the different diameters of its natural binding partners. The chain is Apolipoprotein C-III (Apoc3) from Rattus norvegicus (Rat).